Here is a 158-residue protein sequence, read N- to C-terminus: Cyclic pyranopterin monophosphate synthase (158 aa).

Substrate is bound by residues Met-74 to His-76 and Met-112 to Glu-113. The active site involves Asp-127.

This sequence belongs to the MoaC family. In terms of assembly, homohexamer; trimer of dimers.

The catalysed reaction is (8S)-3',8-cyclo-7,8-dihydroguanosine 5'-triphosphate = cyclic pyranopterin phosphate + diphosphate. The protein operates within cofactor biosynthesis; molybdopterin biosynthesis. Functionally, catalyzes the conversion of (8S)-3',8-cyclo-7,8-dihydroguanosine 5'-triphosphate to cyclic pyranopterin monophosphate (cPMP). The chain is Cyclic pyranopterin monophosphate synthase from Helicobacter pylori (strain HPAG1).